Reading from the N-terminus, the 520-residue chain is UDP-N-acetylmuramoyl-L-alanyl-D-glutamate--2,6-diaminopimelate ligase (520 aa).

Leu48 serves as a coordination point for UDP-N-acetyl-alpha-D-muramoyl-L-alanyl-D-glutamate. An ATP-binding site is contributed by 134–140 (GTSGKTT). UDP-N-acetyl-alpha-D-muramoyl-L-alanyl-D-glutamate-binding positions include 176–177 (TT), Ser203, and Arg211. Position 243 is an N6-carboxylysine (Lys243). Meso-2,6-diaminopimelate-binding positions include Arg405, 429–432 (DNPR), Gly483, and Glu487. Positions 429–432 (DNPR) match the Meso-diaminopimelate recognition motif motif.

Belongs to the MurCDEF family. MurE subfamily. It depends on Mg(2+) as a cofactor. Post-translationally, carboxylation is probably crucial for Mg(2+) binding and, consequently, for the gamma-phosphate positioning of ATP.

It localises to the cytoplasm. The catalysed reaction is UDP-N-acetyl-alpha-D-muramoyl-L-alanyl-D-glutamate + meso-2,6-diaminopimelate + ATP = UDP-N-acetyl-alpha-D-muramoyl-L-alanyl-gamma-D-glutamyl-meso-2,6-diaminopimelate + ADP + phosphate + H(+). Its pathway is cell wall biogenesis; peptidoglycan biosynthesis. In terms of biological role, catalyzes the addition of meso-diaminopimelic acid to the nucleotide precursor UDP-N-acetylmuramoyl-L-alanyl-D-glutamate (UMAG) in the biosynthesis of bacterial cell-wall peptidoglycan. In Mycobacterium avium (strain 104), this protein is UDP-N-acetylmuramoyl-L-alanyl-D-glutamate--2,6-diaminopimelate ligase.